Here is a 130-residue protein sequence, read N- to C-terminus: Large ribosomal subunit protein bL20 (130 aa).

This sequence belongs to the bacterial ribosomal protein bL20 family.

In terms of biological role, binds directly to 23S ribosomal RNA and is necessary for the in vitro assembly process of the 50S ribosomal subunit. It is not involved in the protein synthesizing functions of that subunit. This chain is Large ribosomal subunit protein bL20, found in Clavibacter sepedonicus (Clavibacter michiganensis subsp. sepedonicus).